A 1847-amino-acid polypeptide reads, in one-letter code: Peripheral-type benzodiazepine receptor-associated protein 1 (1847 aa).

3 disordered regions span residues 57-81, 282-318, and 560-626; these read EESS…GTET, NQRE…EDDV, and SGPK…DTAS. Composition is skewed to low complexity over residues 294 to 310 and 600 to 613; these read GSTA…GAPG and SLSN…IHNS. The SH3 1 domain occupies 651-718; the sequence is ARIQVFLARY…PSNFVERVSD (68 aa). The tract at residues 728–787 is disordered; that stretch reads ELADSSHSSGPELSFLSGGGGGCSSGGQSSGGRSQPRPEEEATGDELSLSPPPEGLGEPL. The segment covering 744-757 has biased composition (gly residues); that stretch reads SGGGGGCSSGGQSS. 3 Fibronectin type-III domains span residues 789–880, 882–974, and 979–1077; these read VPYP…AGAG, VPSQ…TLPA, and APLD…PALA. Disordered stretches follow at residues 1107–1174, 1191–1215, 1240–1307, 1322–1478, and 1514–1616; these read LGYT…EGPD, DAGP…VCHR, NSLV…ILEQ, FSIP…ESSL, and PTDG…SHQD. The segment covering 1122 to 1133 has biased composition (polar residues); the sequence is TQDSPASLSTEM. The segment covering 1203–1215 has biased composition (basic and acidic residues); it reads LTQKEPSTEVCHR. The span at 1253-1266 shows a compositional bias: acidic residues; sequence DIQEEEEEEEEEEE. Over residues 1272 to 1284 the composition is skewed to polar residues; sequence WSFQKQVAGNSIG. Composition is skewed to acidic residues over residues 1296-1305 and 1325-1335; these read CETDSDEEIL and PEEEEEEDEEE. Residues 1340–1352 show a composition bias toward low complexity; the sequence is PGPSSSSQDPSQP. 2 stretches are compositionally biased toward basic and acidic residues: residues 1412–1421 and 1546–1578; these read RPQDPREHCS and AWEK…ESRG. An SH3 2 domain is found at 1617–1685; sequence LPLRVFVALF…PCNMVAEVAV (69 aa). Disordered stretches follow at residues 1701–1747 and 1818–1847; these read PPNV…PGPP and LEGP…RVQC. One can recognise an SH3 3 domain in the interval 1756–1823; it reads KTSRPMVAAF…PSNFLEGPGP (68 aa).

The protein belongs to the RIMBP family. As to quaternary structure, interacts with RIMS1 and RIMS2. Interacts with TSPO. Interacts with CACNA1A. Specifically expressed in brain. High expression level in the limbic system such as the nucleus accumbens, septum, and hippocampus, as well as on the cerebellum and pineal gland. Abundant in the CA1 region of the hippocampus.

It localises to the cytoplasm. Its subcellular location is the mitochondrion. Its function is as follows. Required for synaptic transmission regulation. It probably controls the recruitement of voltage-gated calcium channels to the presynaptic membrane, and modulates neurotransmitter release. This is Peripheral-type benzodiazepine receptor-associated protein 1 from Rattus norvegicus (Rat).